The primary structure comprises 1247 residues: F-box/WD repeat-containing protein A (1247 aa).

Residues 1–214 (MQYVNGNDIS…PATVSGRLAK (214 aa)) form the START domain. Disordered stretches follow at residues 484-514 (GNKD…DNII) and 552-576 (QQPQ…KEIK). Over residues 552-566 (QQPQQQQQQPQEQQQ) the composition is skewed to low complexity. One can recognise an F-box domain in the interval 631–677 (NSGFDNLPEEVVQIIFSNLSAINIVNLSLVCKRFKMATDSPILWKNL). Disordered stretches follow at residues 697-744 (SNLS…QQQQ) and 833-856 (GQES…KRDN). 2 stretches are compositionally biased toward low complexity: residues 707 to 719 (NSNS…GSSS) and 726 to 744 (QQQN…QQQQ). A compositionally biased stretch (polar residues) spans 833–846 (GQESPINKNSSDNP). 7 WD repeats span residues 895-934 (GHNR…GDYE), 945-984 (DHTQ…IEVI), 988-1025 (RPTN…LLWN), 1029-1073 (AHTK…CINT), 1076-1114 (GHSY…TFIS), 1119-1158 (KHTG…LSNI), and 1218-1247 (NHES…RWDF).

As to quaternary structure, component of an SCF complex including at least culA. Formation of this complex appears to require activity of the MAP kinase erk2. Interacts with regA.

Substrate recognition component of a SCF (SKP1-CUL1-F-box protein) E3 ubiquitin-protein ligase complex which mediates the ubiquitination and subsequent proteasomal degradation of target proteins. May target the cAMP phosphodiesterase regA for degradation leading to an increase in cAMP and PKA activity. Promotes development of prestalk cells as opposed to prespores within the developing fruiting body. Required for culmination and fruiting body development. The sequence is that of F-box/WD repeat-containing protein A (fbxA) from Dictyostelium discoideum (Social amoeba).